We begin with the raw amino-acid sequence, 256 residues long: Tryptophan synthase alpha chain (256 aa).

Active-site proton acceptor residues include E51 and D62.

This sequence belongs to the TrpA family. In terms of assembly, tetramer of two alpha and two beta chains.

It catalyses the reaction (1S,2R)-1-C-(indol-3-yl)glycerol 3-phosphate + L-serine = D-glyceraldehyde 3-phosphate + L-tryptophan + H2O. It functions in the pathway amino-acid biosynthesis; L-tryptophan biosynthesis; L-tryptophan from chorismate: step 5/5. Functionally, the alpha subunit is responsible for the aldol cleavage of indoleglycerol phosphate to indole and glyceraldehyde 3-phosphate. This Solidesulfovibrio magneticus (strain ATCC 700980 / DSM 13731 / RS-1) (Desulfovibrio magneticus) protein is Tryptophan synthase alpha chain.